The chain runs to 184 residues: Lactoylglutathione lyase (184 aa).

A2 is modified (N-acetylalanine). An intrachain disulfide couples C19 to C20. Positions 31 to 177 constitute a VOC domain; the sequence is LLQQTMLRIK…DGYWIEILNP (147 aa). Residues Q34 and R38 each contribute to the substrate site. Position 34 (Q34) interacts with Zn(2+). K88 carries the post-translational modification N6-succinyllysine. Residue E100 participates in Zn(2+) binding. N104 serves as a coordination point for substrate. Position 107 is a phosphothreonine (T107). 2 residues coordinate substrate: R123 and H127. Position 127 (H127) interacts with Zn(2+). An S-glutathionyl cysteine modification is found at C139. K148 is subject to N6-acetyllysine; alternate. K148 carries the N6-succinyllysine; alternate modification. Position 157 to 158 (157 to 158) interacts with substrate; it reads KM. E173 provides a ligand contact to Zn(2+). Residue E173 is the Proton donor/acceptor of the active site.

The protein belongs to the glyoxalase I family. Homodimer. Zn(2+) is required as a cofactor. Post-translationally, glutathionylation at Cys-139 inhibits enzyme activity. In terms of processing, phosphorylated at Thr-107 in the presence of CaMK2. However, this is a consensus site for phosphorylation by CK2 so phosphorylation may be mediated by CK2 rather than CaMK2. Phosphorylation is induced by TNF and suppresses the TNF-induced transcriptional activity of NF-kappa-B. Exists in a nitric oxide (NO)-modified form. The exact nature of the modification is unknown, but it suppresses the TNF-induced transcriptional activity of NF-kappa-B.

It catalyses the reaction (R)-S-lactoylglutathione = methylglyoxal + glutathione. It functions in the pathway secondary metabolite metabolism; methylglyoxal degradation; (R)-lactate from methylglyoxal: step 1/2. Its activity is regulated as follows. Subject to competitive inhibition by methyl-gerfelin. In terms of biological role, catalyzes the conversion of hemimercaptal, formed from methylglyoxal and glutathione, to S-lactoylglutathione. Involved in the regulation of TNF-induced transcriptional activity of NF-kappa-B. Required for normal osteoclastogenesis. In Mus musculus (Mouse), this protein is Lactoylglutathione lyase (Glo1).